The primary structure comprises 69 residues: Conotoxin AbVIE (69 aa).

An N-terminal signal peptide occupies residues 1–17 (VLIIAVLFLTACQLTTA). Residues 18 to 40 (ETSSRGKQKHRALRSTDKYSRMT) constitute a propeptide that is removed on maturation. 3 disulfides stabilise this stretch: cysteine 43–cysteine 57, cysteine 50–cysteine 61, and cysteine 56–cysteine 66.

The protein belongs to the conotoxin O1 superfamily. Expressed by the venom duct.

The protein localises to the secreted. The chain is Conotoxin AbVIE from Conus abbreviatus (Abbreviated cone).